The following is a 232-amino-acid chain: Myb-related protein 308 (232 aa).

2 consecutive HTH myb-type domains span residues Lys-9–Leu-61 and Arg-62–Leu-116. 2 consecutive DNA-binding regions (H-T-H motif) follow at residues Trp-37–Leu-61 and Trp-89–Ile-112.

In terms of tissue distribution, expressed in roots, stems, leaves, seed pods and flowers.

Its subcellular location is the nucleus. Transcription factor. This Antirrhinum majus (Garden snapdragon) protein is Myb-related protein 308.